The chain runs to 150 residues: D-aminoacyl-tRNA deacylase (150 aa).

The Gly-cisPro motif, important for rejection of L-amino acids signature appears at 138–139; the sequence is GP.

The protein belongs to the DTD family. Homodimer.

The protein resides in the cytoplasm. It catalyses the reaction glycyl-tRNA(Ala) + H2O = tRNA(Ala) + glycine + H(+). It carries out the reaction a D-aminoacyl-tRNA + H2O = a tRNA + a D-alpha-amino acid + H(+). An aminoacyl-tRNA editing enzyme that deacylates mischarged D-aminoacyl-tRNAs. Also deacylates mischarged glycyl-tRNA(Ala), protecting cells against glycine mischarging by AlaRS. Acts via tRNA-based rather than protein-based catalysis; rejects L-amino acids rather than detecting D-amino acids in the active site. By recycling D-aminoacyl-tRNA to D-amino acids and free tRNA molecules, this enzyme counteracts the toxicity associated with the formation of D-aminoacyl-tRNA entities in vivo and helps enforce protein L-homochirality. This chain is D-aminoacyl-tRNA deacylase, found in Bacteroides fragilis (strain YCH46).